A 51-amino-acid polypeptide reads, in one-letter code: Large ribosomal subunit protein eL39 (51 aa).

This sequence belongs to the eukaryotic ribosomal protein eL39 family.

This is Large ribosomal subunit protein eL39 from Sulfurisphaera tokodaii (strain DSM 16993 / JCM 10545 / NBRC 100140 / 7) (Sulfolobus tokodaii).